We begin with the raw amino-acid sequence, 205 residues long: Molybdenum cofactor guanylyltransferase (205 aa).

Residues 14–16 (LAG), K27, D77, and D107 contribute to the GTP site. Residue D107 participates in Mg(2+) binding.

Belongs to the MobA family. In terms of assembly, monomer. Requires Mg(2+) as cofactor.

The protein localises to the cytoplasm. It catalyses the reaction Mo-molybdopterin + GTP + H(+) = Mo-molybdopterin guanine dinucleotide + diphosphate. Transfers a GMP moiety from GTP to Mo-molybdopterin (Mo-MPT) cofactor (Moco or molybdenum cofactor) to form Mo-molybdopterin guanine dinucleotide (Mo-MGD) cofactor. The sequence is that of Molybdenum cofactor guanylyltransferase from Burkholderia lata (strain ATCC 17760 / DSM 23089 / LMG 22485 / NCIMB 9086 / R18194 / 383).